Reading from the N-terminus, the 492-residue chain is 6-phosphogluconate dehydrogenase, decarboxylating (492 aa).

NADP(+)-binding positions include 13-18, 36-38, 78-80, and N106; these read GLAVMG, NRT, and VKA. N106 lines the substrate pocket. The residue at position 107 (S107) is a Phosphoserine. Residue 132–134 coordinates substrate; that stretch reads SGG. K187 serves as the catalytic Proton acceptor. 190 to 191 serves as a coordination point for substrate; that stretch reads HN. The active-site Proton donor is the E194. Y195 provides a ligand contact to substrate. S215 bears the Phosphoserine mark. Positions 264, 291, 449, and 455 each coordinate substrate.

This sequence belongs to the 6-phosphogluconate dehydrogenase family. Homodimer.

The catalysed reaction is 6-phospho-D-gluconate + NADP(+) = D-ribulose 5-phosphate + CO2 + NADPH. The protein operates within carbohydrate degradation; pentose phosphate pathway; D-ribulose 5-phosphate from D-glucose 6-phosphate (oxidative stage): step 3/3. Functionally, catalyzes the oxidative decarboxylation of 6-phosphogluconate to ribulose 5-phosphate and CO(2), with concomitant reduction of NADP to NADPH. The polypeptide is 6-phosphogluconate dehydrogenase, decarboxylating (Schizosaccharomyces pombe (strain 972 / ATCC 24843) (Fission yeast)).